We begin with the raw amino-acid sequence, 621 residues long: Hemolysin ahh1 (621 aa).

Positions 1-30 are cleaved as a signal peptide; it reads MKNKKPRKFITQAPTLSLLALALLAGSVQA. In terms of domain architecture, Ricin B-type lectin spans 491-610; it reads RPVNLQLGGF…QNVSVRTLTS (120 aa).

The protein belongs to the HlyA hemolysin family.

Functionally, bacterial hemolysins are exotoxins that attack blood cell membranes and cause cell rupture by mechanisms not clearly defined. This Aeromonas hydrophila subsp. hydrophila (strain ATCC 7966 / DSM 30187 / BCRC 13018 / CCUG 14551 / JCM 1027 / KCTC 2358 / NCIMB 9240 / NCTC 8049) protein is Hemolysin ahh1 (ahh1).